The sequence spans 196 residues: C-type lectin domain family 2 member F (196 aa).

The interval 1–21 (MNAQCLKKPEEGESSPGTGDK) is disordered. At 1–41 (MNAQCLKKPEEGESSPGTGDKILQRNSLRAISPESSAKLYC) the chain is on the cytoplasmic side. The helical; Signal-anchor for type II membrane protein transmembrane segment at 42–62 (CCGVIMVLTVAVVALSVALPA) threads the bilayer. At 63-196 (TKTEQILINK…SRSSNYMLQC (134 aa)) the chain is on the extracellular side. Cysteine 77 and cysteine 88 form a disulfide bridge. One can recognise a C-type lectin domain in the interval 84-187 (VGNKCFYFSE…DYIPRKWICS (104 aa)). Asparagine 97 is a glycosylation site (N-linked (GlcNAc...) asparagine). A disulfide bridge connects residues cysteine 105 and cysteine 186.

Its subcellular location is the cell membrane. Its function is as follows. Lectin-type cell surface receptor. In Mus musculus (Mouse), this protein is C-type lectin domain family 2 member F (Clec2f).